The primary structure comprises 242 residues: MISDINALKYKKVLLKVSGEALMGDKQFGHEYEVIKKIAGDIKEVIDLGVEVAIVVGGGNIYRGINAALVGMDRASADYIGMLATVINALTLQNVMESLNIYTRVLSAIPMMSVCEPYIRRKAKRHMEKKRVVIFAGGTGNPFCTTDSAAVLRAIEMNCDILLKATQVDGVYDSDPKKNPDAKKYFTISYKDVITNNLQVMDTAAIAVARENKLPIRVFSIKEQGNFARVIQDKGEYTTIEE.

16-19 (KVSG) contributes to the ATP binding site. Residue glycine 58 coordinates UMP. ATP-binding residues include glycine 59 and arginine 63. UMP is bound by residues aspartate 78 and 139–146 (TGNPFCTT). ATP contacts are provided by threonine 166, glutamine 167, tyrosine 172, and aspartate 175.

This sequence belongs to the UMP kinase family. Homohexamer.

The protein resides in the cytoplasm. It catalyses the reaction UMP + ATP = UDP + ADP. The protein operates within pyrimidine metabolism; CTP biosynthesis via de novo pathway; UDP from UMP (UMPK route): step 1/1. Inhibited by UTP. Functionally, catalyzes the reversible phosphorylation of UMP to UDP. This is Uridylate kinase from Rickettsia felis (strain ATCC VR-1525 / URRWXCal2) (Rickettsia azadi).